The chain runs to 146 residues: Hemoglobin subunit beta (146 aa).

N-acetylvaline is present on V1. In terms of domain architecture, Globin spans H2 to H146. Phosphoserine is present on S44. K59 is subject to N6-acetyllysine. Residue H63 participates in heme b binding. K82 bears the N6-acetyllysine mark. Residue H92 participates in heme b binding. C93 carries the S-nitrosocysteine modification. K144 carries the post-translational modification N6-acetyllysine.

It belongs to the globin family. Heterotetramer of two alpha chains and two beta chains. Red blood cells.

Functionally, involved in oxygen transport from the lung to the various peripheral tissues. The polypeptide is Hemoglobin subunit beta (Tamias merriami (Merriam's chipmunk)).